A 675-amino-acid chain; its full sequence is Nexilin (675 aa).

A disordered region spans residues 1–66 (MNDISQKAEI…RKEQYIRERE (66 aa)). Lys16 bears the Phosphoserine mark. Residues 27 to 66 (GKGDVKDKFEAMQRAREERNQRRSRDEKQRRKEQYIRERE) are compositionally biased toward basic and acidic residues. Phosphoserine is present on Ser80. The segment at 105-127 (RFAEMEKQRQEEQRKRTEEERKR) is disordered. Ser241 is modified (phosphoserine). Disordered stretches follow at residues 254–278 (LERQ…EEEK) and 313–336 (SFEE…ARRR). A phosphoserine mark is found at Ser357 and Ser365. Thr370 is subject to Phosphothreonine. Disordered regions lie at residues 487-513 (ENFH…KVNM) and 551-584 (LQKK…APWF). Phosphoserine occurs at positions 564 and 569. The Ig-like domain occupies 582-670 (PWFKKPLKNT…GSAASTCILT (89 aa)).

Interacts with F-actin. In terms of tissue distribution, abundantly expressed in heart and skeletal muscle, and at lower levels in placenta, lung, liver and pancreas. Also expressed in HeLaS3 and MOLT-4 cell lines.

The protein resides in the cytoplasm. Its subcellular location is the cytoskeleton. The protein localises to the cell junction. It is found in the adherens junction. It localises to the myofibril. The protein resides in the sarcomere. Its subcellular location is the z line. Its function is as follows. Involved in regulating cell migration through association with the actin cytoskeleton. Has an essential role in the maintenance of Z line and sarcomere integrity. The protein is Nexilin of Homo sapiens (Human).